The sequence spans 427 residues: 3-phosphoshikimate 1-carboxyvinyltransferase (427 aa).

3-phosphoshikimate-binding residues include Lys-20, Ser-21, and Arg-25. Lys-20 lines the phosphoenolpyruvate pocket. The phosphoenolpyruvate site is built by Gly-92 and Arg-120. Positions 166, 168, 312, and 339 each coordinate 3-phosphoshikimate. Gln-168 contributes to the phosphoenolpyruvate binding site. Asp-312 functions as the Proton acceptor in the catalytic mechanism. Phosphoenolpyruvate is bound by residues Arg-343 and Arg-385.

Belongs to the EPSP synthase family. As to quaternary structure, monomer.

It localises to the cytoplasm. The catalysed reaction is 3-phosphoshikimate + phosphoenolpyruvate = 5-O-(1-carboxyvinyl)-3-phosphoshikimate + phosphate. The protein operates within metabolic intermediate biosynthesis; chorismate biosynthesis; chorismate from D-erythrose 4-phosphate and phosphoenolpyruvate: step 6/7. Its function is as follows. Catalyzes the transfer of the enolpyruvyl moiety of phosphoenolpyruvate (PEP) to the 5-hydroxyl of shikimate-3-phosphate (S3P) to produce enolpyruvyl shikimate-3-phosphate and inorganic phosphate. The polypeptide is 3-phosphoshikimate 1-carboxyvinyltransferase (Streptococcus equi subsp. equi (strain 4047)).